Reading from the N-terminus, the 1411-residue chain is DNA-directed RNA polymerase subunit beta' (1411 aa).

Cysteine 70, cysteine 72, cysteine 85, and cysteine 88 together coordinate Zn(2+). Aspartate 460, aspartate 462, and aspartate 464 together coordinate Mg(2+). Residues cysteine 814, cysteine 889, cysteine 896, and cysteine 899 each contribute to the Zn(2+) site. Polar residues predominate over residues arginine 1387–serine 1399. Positions arginine 1387–phenylalanine 1411 are disordered.

The protein belongs to the RNA polymerase beta' chain family. In terms of assembly, the RNAP catalytic core consists of 2 alpha, 1 beta, 1 beta' and 1 omega subunit. When a sigma factor is associated with the core the holoenzyme is formed, which can initiate transcription. The cofactor is Mg(2+). Requires Zn(2+) as cofactor.

The enzyme catalyses RNA(n) + a ribonucleoside 5'-triphosphate = RNA(n+1) + diphosphate. Its function is as follows. DNA-dependent RNA polymerase catalyzes the transcription of DNA into RNA using the four ribonucleoside triphosphates as substrates. This Xylella fastidiosa (strain M12) protein is DNA-directed RNA polymerase subunit beta'.